The chain runs to 628 residues: MSQKIHILPESLCNQIAAGEVVERPASVVKELVENALDAGASRIQVDVENGGKRLIRVTDNGCGMSREDAFLCLERHATSKVRAEQDLFRLTTLGFRGEALPSIAAVSRFTLRTRLAEDVEGWELVVEGGTVKRSSAAGVPPGTIIEIRNLFFNTPARRKFLRRDETELGHIGETLTRLALSCPEVCFRFMHNGRMLWEVNRQKSLVERAAELLGREAVRDMLPVERQGPEGMRLHGLISSPRLNRSGLGGMFTFINGRFIRDKVVQHALADGYRNLLAKGRHPVLVLFLEIDPSQVDVNVHPTKHEVRFRQQALVHDFIVKALRDHLQQVPTSAMPAPGNSPFTVPARENAASVKPDETKPALADTPAAFSAGEGSSRSDVPYPSASQVTETTDSYDAHDSGVEGASTAPPLSEEGLFSVTADVRPSEQTENSGFFASLRLIGQYQNSYLVCQSEKDLILIDQHAAHERIGFEHLRKQYLAGSIERQLLLFPLVLEFDFRLGRIVEEQRDSLFRLGFALENFGGNAFALKELPRMLKEADAERLVRDVVDEFAAIGRSQAVEIELERILLKMACHAMVRAHQRLSFDEMQALLDELDKTPFSSNCPHGRPTFLRWSLGELERLFKRA.

Residues 332–416 (PTSAMPAPGN…ASTAPPLSEE (85 aa)) form a disordered region. Positions 375–396 (EGSSRSDVPYPSASQVTETTDS) are enriched in polar residues.

Belongs to the DNA mismatch repair MutL/HexB family.

In terms of biological role, this protein is involved in the repair of mismatches in DNA. It is required for dam-dependent methyl-directed DNA mismatch repair. May act as a 'molecular matchmaker', a protein that promotes the formation of a stable complex between two or more DNA-binding proteins in an ATP-dependent manner without itself being part of a final effector complex. This Syntrophotalea carbinolica (strain DSM 2380 / NBRC 103641 / GraBd1) (Pelobacter carbinolicus) protein is DNA mismatch repair protein MutL.